A 448-amino-acid chain; its full sequence is Tubulin beta-1 chain (448 aa).

GTP is bound by residues Gln-11, Glu-72, Ser-141, Gly-145, Thr-146, Gly-147, Asn-207, and Asn-229. Glu-72 serves as a coordination point for Mg(2+). Positions 424-448 (QQYQDAGMDDDEAEEAYEEEEPVEE) are disordered. The span at 430–448 (GMDDDEAEEAYEEEEPVEE) shows a compositional bias: acidic residues.

This sequence belongs to the tubulin family. In terms of assembly, dimer of alpha and beta chains. A typical microtubule is a hollow water-filled tube with an outer diameter of 25 nm and an inner diameter of 15 nM. Alpha-beta heterodimers associate head-to-tail to form protofilaments running lengthwise along the microtubule wall with the beta-tubulin subunit facing the microtubule plus end conferring a structural polarity. Microtubules usually have 13 protofilaments but different protofilament numbers can be found in some organisms and specialized cells. Mg(2+) serves as cofactor.

It is found in the cytoplasm. The protein localises to the cytoskeleton. Tubulin is the major constituent of microtubules, a cylinder consisting of laterally associated linear protofilaments composed of alpha- and beta-tubulin heterodimers. Microtubules grow by the addition of GTP-tubulin dimers to the microtubule end, where a stabilizing cap forms. Below the cap, tubulin dimers are in GDP-bound state, owing to GTPase activity of alpha-tubulin. In Colletotrichum gloeosporioides (Anthracnose fungus), this protein is Tubulin beta-1 chain (TUB1).